A 691-amino-acid polypeptide reads, in one-letter code: Ribonuclease J (691 aa).

Residues 1-89 are disordered; it reads MTDNNHYENN…TRNYAKEELD (89 aa). Residues 1 to 132 form a loss of region decreases protein stability, still able to interact with RhpA, but has decreased RNase activity even on ssRNA region; the sequence is MTDNNHYENN…KIQVEHLNPH (132 aa). Over residues 10-19 the composition is skewed to low complexity; sequence NESNENSSEN. The segment covering 41–57 has biased composition (basic and acidic residues); it reads RENAQKNGESSHHEAPS. Positions 58–82 are enriched in basic residues; the sequence is HHKKEHRPNKKPNNHHKQKHAKTRN. Lysine 134 and lysine 140 each carry N6-acetyllysine. Zn(2+)-binding residues include histidine 208, histidine 210, aspartate 212, histidine 213, histidine 277, and aspartate 299. N6-acetyllysine occurs at positions 323, 337, and 397. Position 500–504 (500–504) interacts with substrate; that stretch reads HVSGH. Lysine 511 is modified (N6-acetyllysine). Histidine 526 serves as a coordination point for Zn(2+). An N6-acetyllysine mark is found at lysine 547, lysine 634, and lysine 649.

The protein belongs to the metallo-beta-lactamase superfamily. RNA-metabolizing metallo-beta-lactamase-like family. Bacterial RNase J subfamily. In terms of assembly, homodimer. Homotetramer; dimer of homodimers. Interacts with RNA helicase RphA, might be a member of a minimal RNA degradosome complex. It depends on Zn(2+) as a cofactor. Acetylated on nine lysine residues. Some of the residues are acetylated by multiple different mechanisms. RimL is partially responsible for the acetylation of Lys-323, Lys-397 and Lys-649. HPB8_1270 homolog is partially responsible for the acetylation of Lys-323, Lys-397, Lys-511 and Lys-649. Acetyl-phosphate-mediated non-enzymatic acetylation pathway takes part in the acetylation of Lys-134, Lys-323, Lys-397, Lys-511 and Lys-649. Acetylation of the remaining residues Lys-140, Lys-337, Lys-547 and Lys-634 occurs by a yet undetermined mechanism. Acetylation on a number of these residues is important for growth regulation and proper cell morphology.

The protein resides in the cytoplasm. Catalytic activity is regulated by the balance between homodimers and homotetramers, with homotetramers being the active forms of this enzyme. Acetylation allosterically regulates the homooligomerization state and hence the catalytic activity. An RNase that has 5'-3' exoribonuclease and endoribonuclease activity. Degrades 5'-monophosphorylated ssRNA and dsRNA, considerably more active on ssRNA. Association with RhpA significantly increases the dsRNase activity. Degrades RNA substrate with hairpin structures at both ends with low activity, but presence of RhpA significantly increases the activity on this substrate. Stimulates ATPase activity of RNA helicase RhpA. Involved in stabilization of mRNA but apparently not rRNA. The chain is Ribonuclease J from Helicobacter pylori (strain B128).